Here is a 249-residue protein sequence, read N- to C-terminus: Glucosamine-6-phosphate deaminase (249 aa).

The active-site Proton acceptor; for enolization step is Asp-67. Residue Asn-136 is the For ring-opening step of the active site. His-138 acts as the Proton acceptor; for ring-opening step in catalysis. Residue Glu-143 is the For ring-opening step of the active site.

The protein belongs to the glucosamine/galactosamine-6-phosphate isomerase family. NagB subfamily.

It catalyses the reaction alpha-D-glucosamine 6-phosphate + H2O = beta-D-fructose 6-phosphate + NH4(+). It participates in amino-sugar metabolism; N-acetylneuraminate degradation; D-fructose 6-phosphate from N-acetylneuraminate: step 5/5. Catalyzes the reversible isomerization-deamination of glucosamine 6-phosphate (GlcN6P) to form fructose 6-phosphate (Fru6P) and ammonium ion. The chain is Glucosamine-6-phosphate deaminase from Clostridium botulinum (strain Alaska E43 / Type E3).